The sequence spans 132 residues: Agouti-signaling protein (132 aa).

The first 22 residues, 1-22 (MDVTRLLLATLLVFLCFFAAYS), serve as a signal peptide directing secretion. Residue Asn-39 is glycosylated (N-linked (GlcNAc...) asparagine). A disordered region spans residues 61 to 93 (KISRKEAEKKRSSKKEASKQKVARPRTPLSVPC). Residues 64–79 (RKEAEKKRSSKKEASK) are compositionally biased toward basic and acidic residues. 5 disulfide bridges follow: Cys-93–Cys-108, Cys-100–Cys-114, Cys-107–Cys-125, Cys-111–Cys-132, and Cys-116–Cys-123. Positions 93–132 (CVSTRGSCKPPAPACCHPCASCQCRFFRSACSCRVLNVNC) constitute an Agouti domain.

It localises to the secreted. In terms of biological role, involved in the regulation of melanogenesis. The binding of ASP to MC1R precludes alpha-MSH initiated signaling and thus blocks production of cAMP, leading to a down-regulation of eumelanogenesis (brown/black pigment) and thus increasing synthesis of pheomelanin (yellow/red pigment). The sequence is that of Agouti-signaling protein (ASIP) from Callithrix geoffroyi (Geoffroy's marmoset).